The following is a 121-amino-acid chain: Large ribosomal subunit protein bL12 (121 aa).

It belongs to the bacterial ribosomal protein bL12 family. Homodimer. Part of the ribosomal stalk of the 50S ribosomal subunit. Forms a multimeric L10(L12)X complex, where L10 forms an elongated spine to which 2 to 4 L12 dimers bind in a sequential fashion. Binds GTP-bound translation factors.

Functionally, forms part of the ribosomal stalk which helps the ribosome interact with GTP-bound translation factors. Is thus essential for accurate translation. The protein is Large ribosomal subunit protein bL12 of Pectobacterium carotovorum subsp. carotovorum (strain PC1).